The primary structure comprises 229 residues: Cytochrome c oxidase subunit 2 (229 aa).

The Mitochondrial intermembrane segment spans residues 1 to 26; sequence MATWMNINLQDANSSTMEQLTMFHDH. A helical transmembrane segment spans residues 27–48; the sequence is TLMILTMITSIVTFIMVSMTTN. Topologically, residues 49 to 62 are mitochondrial matrix; that stretch reads TLINRYLLEGQTIE. The helical transmembrane segment at 63 to 82 threads the bilayer; sequence FIWTTIPAITLIFIALPSLH. Residues 83 to 229 lie on the Mitochondrial intermembrane side of the membrane; that stretch reads LLYLIDEINN…LKWINKSLSS (147 aa). Cu cation contacts are provided by H161, C196, E198, C200, H204, and M207. Residue E198 participates in Mg(2+) binding.

The protein belongs to the cytochrome c oxidase subunit 2 family. Component of the cytochrome c oxidase (complex IV, CIV), a multisubunit enzyme composed of a catalytic core of 3 subunits and several supernumerary subunits. The complex exists as a monomer or a dimer and forms supercomplexes (SCs) in the inner mitochondrial membrane with ubiquinol-cytochrome c oxidoreductase (cytochrome b-c1 complex, complex III, CIII). Cu cation is required as a cofactor.

It localises to the mitochondrion inner membrane. The catalysed reaction is 4 Fe(II)-[cytochrome c] + O2 + 8 H(+)(in) = 4 Fe(III)-[cytochrome c] + 2 H2O + 4 H(+)(out). Its function is as follows. Component of the cytochrome c oxidase, the last enzyme in the mitochondrial electron transport chain which drives oxidative phosphorylation. The respiratory chain contains 3 multisubunit complexes succinate dehydrogenase (complex II, CII), ubiquinol-cytochrome c oxidoreductase (cytochrome b-c1 complex, complex III, CIII) and cytochrome c oxidase (complex IV, CIV), that cooperate to transfer electrons derived from NADH and succinate to molecular oxygen, creating an electrochemical gradient over the inner membrane that drives transmembrane transport and the ATP synthase. Cytochrome c oxidase is the component of the respiratory chain that catalyzes the reduction of oxygen to water. Electrons originating from reduced cytochrome c in the intermembrane space (IMS) are transferred via the dinuclear copper A center (CU(A)) of subunit 2 and heme A of subunit 1 to the active site in subunit 1, a binuclear center (BNC) formed by heme A3 and copper B (CU(B)). The BNC reduces molecular oxygen to 2 water molecules using 4 electrons from cytochrome c in the IMS and 4 protons from the mitochondrial matrix. This Oncopeltus fasciatus (Large milkweed bug) protein is Cytochrome c oxidase subunit 2 (COII).